The primary structure comprises 792 residues: Endonuclease MutS2 (792 aa).

335-342 contributes to the ATP binding site; it reads GPNTGGKT. A Smr domain is found at 717–792; that stretch reads VDLRGLNLEE…GAGVTIVKLK (76 aa).

It belongs to the DNA mismatch repair MutS family. MutS2 subfamily. Homodimer. Binds to stalled ribosomes, contacting rRNA.

Its function is as follows. Endonuclease that is involved in the suppression of homologous recombination and thus may have a key role in the control of bacterial genetic diversity. In terms of biological role, acts as a ribosome collision sensor, splitting the ribosome into its 2 subunits. Detects stalled/collided 70S ribosomes which it binds and splits by an ATP-hydrolysis driven conformational change. Acts upstream of the ribosome quality control system (RQC), a ribosome-associated complex that mediates the extraction of incompletely synthesized nascent chains from stalled ribosomes and their subsequent degradation. Probably generates substrates for RQC. This Clostridioides difficile (strain 630) (Peptoclostridium difficile) protein is Endonuclease MutS2.